A 189-amino-acid polypeptide reads, in one-letter code: Calcyphosin (189 aa).

EF-hand domains lie at 21–56 (SGIQGVARFFRRLDQDGSRSLDVRELQRGLAELGLV), 57–92 (LDTAEMEGVCRRWDRDGSGTLDLEEFLRALRPPMSQ), 93–128 (AREAVVTAAFAKLDRSGDGVVTVDDLRGVYSGRTHP), and 136–172 (TEEQVLRHFLDNFDSSEKDGQVTLAEFQDYYSGVSAS). Residues Asp-34, Asp-36, Ser-38, Ser-40, Glu-45, Asp-70, Asp-72, Ser-74, Thr-76, Glu-81, Asp-106, Ser-108, Asp-110, and Asp-117 each coordinate Ca(2+). Ser-40 bears the Phosphoserine; by PKA mark.

In terms of assembly, monomer. Does not form oligomers in the presence of calcium.

It is found in the cytoplasm. Functionally, calcium-binding protein. May play a role in cellular signaling events (Potential). The chain is Calcyphosin (CAPS) from Bos taurus (Bovine).